Reading from the N-terminus, the 263-residue chain is UPF0246 protein Mmar10_0828 (263 aa).

It belongs to the UPF0246 family.

The sequence is that of UPF0246 protein Mmar10_0828 from Maricaulis maris (strain MCS10) (Caulobacter maris).